Reading from the N-terminus, the 113-residue chain is Iron-sulfur cluster insertion protein ErpA (113 aa).

Iron-sulfur cluster contacts are provided by C41, C105, and C107.

The protein belongs to the HesB/IscA family. In terms of assembly, homodimer. Requires iron-sulfur cluster as cofactor.

In terms of biological role, required for insertion of 4Fe-4S clusters for at least IspG. The protein is Iron-sulfur cluster insertion protein ErpA of Actinobacillus pleuropneumoniae serotype 3 (strain JL03).